The sequence spans 389 residues: Innexin-6 (389 aa).

A run of 4 helical transmembrane segments spans residues 36–56 (VVILAVSSALLLSSHFIGDPI), 111–131 (VFALQAFLFYIPRFIWKAMIA), 190–210 (LFYTLSTVWQAVNAWIQFYIL), and 276–296 (LFIFLWFWLVFVAVVSTVNCF).

This sequence belongs to the pannexin family.

The protein resides in the cell membrane. Its subcellular location is the cell junction. The protein localises to the gap junction. Its function is as follows. Structural component of the gap junctions. The chain is Innexin-6 (inx-6) from Caenorhabditis elegans.